A 278-amino-acid chain; its full sequence is Thiazole synthase (278 aa).

Catalysis depends on Lys107, which acts as the Schiff-base intermediate with DXP. Residues Gly168, 194–195 (AG), and 216–217 (AS) each bind 1-deoxy-D-xylulose 5-phosphate.

It belongs to the ThiG family. As to quaternary structure, homotetramer. Forms heterodimers with either ThiH or ThiS.

Its subcellular location is the cytoplasm. It catalyses the reaction [ThiS sulfur-carrier protein]-C-terminal-Gly-aminoethanethioate + 2-iminoacetate + 1-deoxy-D-xylulose 5-phosphate = [ThiS sulfur-carrier protein]-C-terminal Gly-Gly + 2-[(2R,5Z)-2-carboxy-4-methylthiazol-5(2H)-ylidene]ethyl phosphate + 2 H2O + H(+). Its pathway is cofactor biosynthesis; thiamine diphosphate biosynthesis. Catalyzes the rearrangement of 1-deoxy-D-xylulose 5-phosphate (DXP) to produce the thiazole phosphate moiety of thiamine. Sulfur is provided by the thiocarboxylate moiety of the carrier protein ThiS. In vitro, sulfur can be provided by H(2)S. The polypeptide is Thiazole synthase (Corynebacterium jeikeium (strain K411)).